A 547-amino-acid chain; its full sequence is Phosphoethanolamine transferase EptA (547 aa).

At 1-9 (MLKRLLKRP) the chain is on the cytoplasmic side. A helical membrane pass occupies residues 10–30 (SLNLLAWLLLAAFYISICLNI). Residues 31 to 47 (AFFKQVLQALPLDSLHN) are Periplasmic-facing. Residues 48–68 (VLVFLSMPVVAFSVINIVLTL) form a helical membrane-spanning segment. The Cytoplasmic segment spans residues 69-79 (SSFLWLNRPLA). The helical transmembrane segment at 80-100 (CLFILVGAAAQYFIMTYGIVI) threads the bilayer. Residues 101–123 (DRSMIANIIDTTPAESYALMTPQ) are Periplasmic-facing. The chain crosses the membrane as a helical span at residues 124–144 (MLLTLGFSGVLAALIACWIKI). Topologically, residues 145–154 (KPATSRLRSV) are cytoplasmic. Residues 155–175 (LFRGANILVSVLLILLVAALF) form a helical membrane-spanning segment. Residues 176-547 (YKDYASLFRN…ILQTCRRVSE (372 aa)) lie on the Periplasmic side of the membrane.

Belongs to the phosphoethanolamine transferase family. EptA subfamily. Has been isolated as a 91 kDa complex containing ZipA-EptA and an unidentified 24 kDa protein.

Its subcellular location is the cell inner membrane. Catalyzes the addition of a phosphoethanolamine moiety to the lipid A. The phosphoethanolamine modification is required for resistance to polymyxin. This is Phosphoethanolamine transferase EptA (eptA) from Escherichia coli (strain K12).